We begin with the raw amino-acid sequence, 544 residues long: CTP synthase (544 aa).

The interval 1–266 (MKKRFIFITG…DQIICHHFKL (266 aa)) is amidoligase domain. CTP is bound at residue S14. S14 contributes to the UTP binding site. ATP is bound by residues 15–20 (SLGKGI) and D72. Positions 72 and 140 each coordinate Mg(2+). Residues 147–149 (DIE), 187–192 (KTKPTQ), and K223 each bind CTP. UTP is bound by residues 187 to 192 (KTKPTQ) and K223. Positions 291–541 (TIGIIGKYIK…IKAAIQYKKI (251 aa)) constitute a Glutamine amidotransferase type-1 domain. G352 is a binding site for L-glutamine. C379 functions as the Nucleophile; for glutamine hydrolysis in the catalytic mechanism. Residues 380–383 (LGMQ), E403, and R469 each bind L-glutamine. Residues H514 and E516 contribute to the active site.

It belongs to the CTP synthase family. As to quaternary structure, homotetramer.

The catalysed reaction is UTP + L-glutamine + ATP + H2O = CTP + L-glutamate + ADP + phosphate + 2 H(+). It catalyses the reaction L-glutamine + H2O = L-glutamate + NH4(+). The enzyme catalyses UTP + NH4(+) + ATP = CTP + ADP + phosphate + 2 H(+). It participates in pyrimidine metabolism; CTP biosynthesis via de novo pathway; CTP from UDP: step 2/2. Its activity is regulated as follows. Allosterically activated by GTP, when glutamine is the substrate; GTP has no effect on the reaction when ammonia is the substrate. The allosteric effector GTP functions by stabilizing the protein conformation that binds the tetrahedral intermediate(s) formed during glutamine hydrolysis. Inhibited by the product CTP, via allosteric rather than competitive inhibition. In terms of biological role, catalyzes the ATP-dependent amination of UTP to CTP with either L-glutamine or ammonia as the source of nitrogen. Regulates intracellular CTP levels through interactions with the four ribonucleotide triphosphates. The protein is CTP synthase of Buchnera aphidicola subsp. Baizongia pistaciae (strain Bp).